A 389-amino-acid polypeptide reads, in one-letter code: MEQVVIVDAIRTPMGRSKGGAFRNVRAEDLSAHLMRSLLARNPALEATAIDDIYWGCVQQTLEQGFNIARNAALLAEIPHSVPAVTVNRLCGSSMQALHDAARMIMTGDAQTCLIGGVEHMGHVPMSHGVDFHPGLSRNVAKAAGMMGLTAEMLSRMHGISREMQDAFAARSHARAWAATQSGAFKNEIIPTGGHDADGVLKQFSYDEVIRPETTVEALSTLRPAFDPVSGTVTAGTSSALSDGAAAMLVMSESRARELGLQPRARIRSMAVVGCDPSIMGYGPVPASKLALKKAGLAASDIDLFEMNEAFAAQILPCIKDLGLMEQIDEKINLNGGAIALGHPLGCSGARISTTLLNLMERKDAQFGLATMCIGLGQGIATVFERVQS.

Cysteine 91 acts as the Acyl-thioester intermediate in catalysis. Active-site proton acceptor residues include histidine 343 and cysteine 373.

This sequence belongs to the thiolase-like superfamily. Thiolase family. Heterotetramer of two alpha chains (FadB) and two beta chains (FadA).

Its subcellular location is the cytoplasm. The catalysed reaction is an acyl-CoA + acetyl-CoA = a 3-oxoacyl-CoA + CoA. Its pathway is lipid metabolism; fatty acid beta-oxidation. Catalyzes the final step of fatty acid oxidation in which acetyl-CoA is released and the CoA ester of a fatty acid two carbons shorter is formed. The chain is 3-ketoacyl-CoA thiolase from Citrobacter koseri (strain ATCC BAA-895 / CDC 4225-83 / SGSC4696).